An 86-amino-acid polypeptide reads, in one-letter code: Probable protein BRICK1 (86 aa).

A coiled-coil region spans residues 47–81; sequence EATTKSKLASLNEKLDILERKLEVLEVQVSSATTN.

The protein belongs to the BRK1 family. As to quaternary structure, binds SCAR.

The protein localises to the cytoplasm. It localises to the cytoskeleton. Involved in regulation of actin and microtubule organization. Part of a WAVE complex that activates the Arp2/3 complex. This chain is Probable protein BRICK1, found in Oryza sativa subsp. japonica (Rice).